The chain runs to 151 residues: Large ribosomal subunit protein uL13 (151 aa).

This sequence belongs to the universal ribosomal protein uL13 family. In terms of assembly, part of the 50S ribosomal subunit.

This protein is one of the early assembly proteins of the 50S ribosomal subunit, although it is not seen to bind rRNA by itself. It is important during the early stages of 50S assembly. This Microcystis aeruginosa (strain NIES-843 / IAM M-2473) protein is Large ribosomal subunit protein uL13.